A 73-amino-acid chain; its full sequence is Toxin Td4 (73 aa).

Residues 1-7 form the signal peptide; sequence IGMVVEC. The LCN-type CS-alpha/beta domain maps to 8 to 70; it reads KDGYLVGNDG…TWDRATNRCG (63 aa). 4 disulfides stabilise this stretch: Cys-18–Cys-69, Cys-22–Cys-44, Cys-30–Cys-50, and Cys-34–Cys-52. Arg-71 bears the Arginine amide mark.

Belongs to the long (4 C-C) scorpion toxin superfamily. Sodium channel inhibitor family. Beta subfamily. In terms of tissue distribution, expressed by the venom gland.

It is found in the secreted. In terms of biological role, beta toxins bind voltage-independently at site-4 of sodium channels (Nav) and shift the voltage of activation toward more negative potentials thereby affecting sodium channel activation and promoting spontaneous and repetitive firing. This chain is Toxin Td4, found in Tityus discrepans (Venezuelan scorpion).